The chain runs to 153 residues: Arginine regulator (153 aa).

The protein belongs to the ArgR family.

Its subcellular location is the cytoplasm. It functions in the pathway amino-acid degradation; L-arginine degradation via ADI pathway. Its function is as follows. Regulates the transcription of the arc operon, involved in arginine catabolism. This chain is Arginine regulator (argR1), found in Lactiplantibacillus plantarum (strain ATCC BAA-793 / NCIMB 8826 / WCFS1) (Lactobacillus plantarum).